The primary structure comprises 85 residues: Coiled-coil-helix-coiled-coil-helix domain-containing protein 7 (85 aa).

Residues 13–55 (INPCLSESDASTRCMDENNYDRERCSSYFLKYKNCRRFWNSVM) enclose the CHCH domain. 2 consecutive short sequence motifs (cx9C motif) follow at residues 16 to 26 (CLSESDASTRC) and 37 to 47 (CSSYFLKYKNC). Cystine bridges form between Cys16-Cys47 and Cys26-Cys37.

The protein belongs to the CHCHD7 family. As to quaternary structure, monomer.

It localises to the mitochondrion intermembrane space. This is Coiled-coil-helix-coiled-coil-helix domain-containing protein 7 (Chchd7) from Mus musculus (Mouse).